The following is a 381-amino-acid chain: tRNA (guanine(26)-N(2))-dimethyltransferase (381 aa).

The 373-residue stretch at 6 to 378 (FEVHEGKAKV…APYEVFVEVM (373 aa)) folds into the Trm1 methyltransferase domain. S-adenosyl-L-methionine-binding residues include Arg38, Arg63, Asp80, Asp122, and Ala123.

The protein belongs to the class I-like SAM-binding methyltransferase superfamily. Trm1 family. As to quaternary structure, monomer.

It catalyses the reaction guanosine(26) in tRNA + 2 S-adenosyl-L-methionine = N(2)-dimethylguanosine(26) in tRNA + 2 S-adenosyl-L-homocysteine + 2 H(+). In terms of biological role, dimethylates a single guanine residue at position 26 of a number of tRNAs using S-adenosyl-L-methionine as donor of the methyl groups. This is tRNA (guanine(26)-N(2))-dimethyltransferase from Pyrococcus furiosus (strain ATCC 43587 / DSM 3638 / JCM 8422 / Vc1).